Reading from the N-terminus, the 239-residue chain is Tetraspanin-9 (239 aa).

At 1–13 the chain is on the cytoplasmic side; the sequence is MARGCLCCLKYMM. Residues 14-34 traverse the membrane as a helical segment; that stretch reads FLFNLIFWLCGCGLLGVGIWL. At 35-55 the chain is on the extracellular side; that stretch reads SVSQGNFATFSPSFPSLSAAN. The helical transmembrane segment at 56–76 threads the bilayer; sequence LVIAIGTIVMVTGFLGCLGAI. Residues 77 to 85 lie on the Cytoplasmic side of the membrane; it reads KENRCLLLS. Residues 86-106 form a helical membrane-spanning segment; it reads FFIVLLIILLAELILIILFFV. Residues 107–203 lie on the Extracellular side of the membrane; sequence YMDKVNENAR…VKMWFDDNKH (97 aa). Asn-180 is a glycosylation site (N-linked (GlcNAc...) asparagine). The chain crosses the membrane as a helical span at residues 204-224; the sequence is VLGTVGMCILIMQILGMAFSM. Topologically, residues 225–239 are cytoplasmic; sequence TLFQHIHRTGKKYDA.

This sequence belongs to the tetraspanin (TM4SF) family. In terms of assembly, found in a complex with GP6. Glycosylated.

The protein resides in the membrane. In Sus scrofa (Pig), this protein is Tetraspanin-9 (TSPAN9).